The primary structure comprises 296 residues: Maltose/maltodextrin transport system permease protein MalG (296 aa).

The Cytoplasmic portion of the chain corresponds to 1-12; sequence MAMVQPKSQKLR. The helical transmembrane segment at 13–35 threads the bilayer; it reads LLITHLGLLIFIAAIMFPLLMVI. The Periplasmic segment spans residues 36–88; that stretch reads AISLREGNFATGSLIPDKISWEHWRLALGFSVEHADGRVTPPPFPVLLWLWNS. An ABC transmembrane type-1 domain is found at 85 to 281; sequence LWNSVKIAGI…IPITLVFLLA (197 aa). Residues 89–111 traverse the membrane as a helical segment; sequence VKIAGITAIGIVALSTTCAYAFA. Topologically, residues 112–123 are cytoplasmic; sequence RMRFPGKATLLK. Residues 124-143 form a helical membrane-spanning segment; the sequence is GMLIFQMFPAVLSLVALYAL. At 144-152 the chain is on the periplasmic side; it reads FDRLGQYIP. A helical transmembrane segment spans residues 153–175; that stretch reads FIGLNTHGGVIFAYLGGIALHVW. Topologically, residues 176-204 are cytoplasmic; it reads TIKGYFETIDSSLEEAAALDGATPWQAFR. The helical transmembrane segment at 205-227 threads the bilayer; the sequence is LVLLPLSVPILAVVFILSFIAAI. Residues 228-257 are Periplasmic-facing; that stretch reads TEVPVASLLLRDVDSYTLAVGMQQYLNPQN. The helical transmembrane segment at 258–280 threads the bilayer; that stretch reads YLWGDFAAAAVLSAIPITLVFLL. Residues 281 to 296 are Cytoplasmic-facing; that stretch reads AQRWLVNGLTAGGVKG.

Belongs to the binding-protein-dependent transport system permease family. MalFG subfamily. As to quaternary structure, the complex is composed of two ATP-binding proteins (MalK), two transmembrane proteins (MalG and MalF) and a solute-binding protein (MalE).

It localises to the cell inner membrane. Its function is as follows. Part of the ABC transporter complex MalEFGK involved in maltose/maltodextrin import. Probably responsible for the translocation of the substrate across the membrane. In Salmonella typhimurium (strain LT2 / SGSC1412 / ATCC 700720), this protein is Maltose/maltodextrin transport system permease protein MalG (malG).